Consider the following 488-residue polypeptide: UDP-N-acetylmuramate--L-alanine ligase (488 aa).

129–135 (GSHGKTT) contacts ATP.

It belongs to the MurCDEF family.

The protein localises to the cytoplasm. It carries out the reaction UDP-N-acetyl-alpha-D-muramate + L-alanine + ATP = UDP-N-acetyl-alpha-D-muramoyl-L-alanine + ADP + phosphate + H(+). It participates in cell wall biogenesis; peptidoglycan biosynthesis. Cell wall formation. The polypeptide is UDP-N-acetylmuramate--L-alanine ligase (Prochlorococcus marinus (strain MIT 9303)).